Reading from the N-terminus, the 161-residue chain is Cytochrome c-type biogenesis protein CcmE (161 aa).

Topologically, residues 1–8 are cytoplasmic; it reads MNPRRQKR. Residues 9–29 form a helical; Signal-anchor for type II membrane protein membrane-spanning segment; sequence LGIILAILIGVSATIGLMIYA. The Periplasmic segment spans residues 30–161; the sequence is LNQNMDLFYT…SEEQKQGSGQ (132 aa). Residues histidine 129 and tyrosine 133 each contribute to the heme site.

Belongs to the CcmE/CycJ family.

Its subcellular location is the cell inner membrane. In terms of biological role, heme chaperone required for the biogenesis of c-type cytochromes. Transiently binds heme delivered by CcmC and transfers the heme to apo-cytochromes in a process facilitated by CcmF and CcmH. The chain is Cytochrome c-type biogenesis protein CcmE from Vibrio vulnificus (strain CMCP6).